Here is a 303-residue protein sequence, read N- to C-terminus: MLPFCFEMTSMSYIGRFAPSPSGPLHFGSLIAALGSYFQAKSQHGQWLVRIEDLDPPREMPGAADLILKTLETYHLFWDGEVVYQSQRHHLYQAQIDHWLQSGQAYYCQCSRKQIKEMGGYYNGHCQELHLDAGAIRLKMTQPITHFDDLRHGQMHIPLELAQEDFIIKRRDGLFAYNLAVVLDDIDQGVTEVVRGADLIEPTGRQISLYHMLGQVPVRYLHLPLAMDKNGNKLSKQNHATGIDLTHPASMILEAMAFLGFAIPKELHQANLDEILRWGVQNWRLNQLPESLEITARFSNGTA.

L-glutamate-binding positions include 16–20 (RFAPS) and glutamate 52. The 'HIGH' region motif lies at 19 to 29 (PSPSGPLHFGS). Positions 108, 110, 122, and 126 each coordinate Zn(2+). L-glutamate contacts are provided by tyrosine 177 and arginine 195. Residues 233–237 (KLSKQ) carry the 'KMSKS' region motif. Lysine 236 lines the ATP pocket.

The protein belongs to the class-I aminoacyl-tRNA synthetase family. GluQ subfamily. It depends on Zn(2+) as a cofactor.

Catalyzes the tRNA-independent activation of glutamate in presence of ATP and the subsequent transfer of glutamate onto a tRNA(Asp). Glutamate is transferred on the 2-amino-5-(4,5-dihydroxy-2-cyclopenten-1-yl) moiety of the queuosine in the wobble position of the QUC anticodon. The polypeptide is Glutamyl-Q tRNA(Asp) synthetase (Vibrio vulnificus (strain YJ016)).